A 285-amino-acid chain; its full sequence is BAG family molecular chaperone regulator 2 (285 aa).

The region spanning 37–113 (RGIRVRVKYG…LILIEDPISQ (77 aa)) is the Ubiquitin-like domain. The BAG domain maps to 132–210 (AISDISFQVE…KYVEALDLLK (79 aa)). Ser244 bears the Phosphoserine mark.

Binds to the ATPase domain of HSP70/HSC70 chaperones.

In terms of biological role, co-chaperone that regulates diverse cellular pathways, such as programmed cell death and stress responses. The chain is BAG family molecular chaperone regulator 2 (BAG2) from Arabidopsis thaliana (Mouse-ear cress).